Reading from the N-terminus, the 238-residue chain is Major prion protein (238 aa).

The first 15 residues, 1 to 15 (MLVLFVATWSDLGLC), serve as a signal peptide directing secretion. The interaction with GRB2, ERI3 and SYN1 stretch occupies residues 16–215 (KKRPKPGGWN…ESQAYYQRGS (200 aa)). The interval 18–93 (RPKPGGWNTG…WHKPSKPKTS (76 aa)) is disordered. A run of 4 repeats spans residues 44 to 52 (PQGGGGWGQ), 53 to 60 (PHGGGWGQ), 61 to 68 (PHGGGWGQ), and 69 to 76 (PHGGGWGQ). The 4 X 8 AA tandem repeats of P-H-G-G-G-W-G-Q stretch occupies residues 44 to 83 (PQGGGGWGQPHGGGWGQPHGGGWGQPHGGGWGQGGGTHNQ). Gly residues predominate over residues 45 to 80 (QGGGGWGQPHGGGWGQPHGGGWGQPHGGGWGQGGGT). Positions 47, 48, 54, 55, 56, 62, 63, 64, 70, 71, and 72 each coordinate Cu(2+). Residues 83-93 (QWHKPSKPKTS) show a composition bias toward basic residues. Cys-164 and Cys-199 are disulfide-bonded. N-linked (GlcNAc...) asparagine glycosylation is found at Asn-166 and Asn-182. Ser-215 is lipidated: GPI-anchor amidated serine. Positions 216–238 (SIVLFSSPPVILLISFLIFLIVG) are cleaved as a propeptide — removed in mature form.

This sequence belongs to the prion family. Monomer and homodimer. Has a tendency to aggregate into amyloid fibrils containing a cross-beta spine, formed by a steric zipper of superposed beta-strands. Soluble oligomers may represent an intermediate stage on the path to fibril formation. Copper binding may promote oligomerization. Interacts with GRB2, APP, ERI3/PRNPIP and SYN1. Mislocalized cytosolically exposed PrP interacts with MGRN1; this interaction alters MGRN1 subcellular location and causes lysosomal enlargement. Interacts with KIAA1191.

It is found in the cell membrane. Its subcellular location is the golgi apparatus. Its function is as follows. Its primary physiological function is unclear. Has cytoprotective activity against internal or environmental stresses. May play a role in neuronal development and synaptic plasticity. May be required for neuronal myelin sheath maintenance. May play a role in iron uptake and iron homeostasis. Soluble oligomers are toxic to cultured neuroblastoma cells and induce apoptosis (in vitro). Association with GPC1 (via its heparan sulfate chains) targets PRNP to lipid rafts. Also provides Cu(2+) or Zn(2+) for the ascorbate-mediated GPC1 deaminase degradation of its heparan sulfate side chains. In Theropithecus gelada (Gelada baboon), this protein is Major prion protein (PRNP).